A 432-amino-acid polypeptide reads, in one-letter code: 3-phosphoshikimate 1-carboxyvinyltransferase (432 aa).

3-phosphoshikimate-binding residues include K23, S24, and R28. K23 lines the phosphoenolpyruvate pocket. The phosphoenolpyruvate site is built by G95 and R123. 3-phosphoshikimate-binding residues include S167, Q169, D317, and K344. A phosphoenolpyruvate-binding site is contributed by Q169. D317 acts as the Proton acceptor in catalysis. The phosphoenolpyruvate site is built by R348 and R390.

It belongs to the EPSP synthase family. In terms of assembly, monomer.

The protein localises to the cytoplasm. The enzyme catalyses 3-phosphoshikimate + phosphoenolpyruvate = 5-O-(1-carboxyvinyl)-3-phosphoshikimate + phosphate. Its pathway is metabolic intermediate biosynthesis; chorismate biosynthesis; chorismate from D-erythrose 4-phosphate and phosphoenolpyruvate: step 6/7. In terms of biological role, catalyzes the transfer of the enolpyruvyl moiety of phosphoenolpyruvate (PEP) to the 5-hydroxyl of shikimate-3-phosphate (S3P) to produce enolpyruvyl shikimate-3-phosphate and inorganic phosphate. The polypeptide is 3-phosphoshikimate 1-carboxyvinyltransferase (Staphylococcus haemolyticus (strain JCSC1435)).